A 395-amino-acid chain; its full sequence is Elongation factor Tu (395 aa).

The tr-type G domain maps to 10–204; the sequence is KPHLNIGTIG…AVDNWIEEPV (195 aa). The interval 19-26 is G1; it reads GHVDHGKT. GTP is bound at residue 19–26; that stretch reads GHVDHGKT. Thr-26 contributes to the Mg(2+) binding site. Positions 60–64 are G2; sequence GITIN. A G3 region spans residues 81 to 84; that stretch reads DCPG. GTP contacts are provided by residues 81–85 and 136–139; these read DCPGH and NKVD. A G4 region spans residues 136-139; the sequence is NKVD. A G5 region spans residues 174–176; the sequence is SAL.

The protein belongs to the TRAFAC class translation factor GTPase superfamily. Classic translation factor GTPase family. EF-Tu/EF-1A subfamily. Monomer.

The protein localises to the cytoplasm. The catalysed reaction is GTP + H2O = GDP + phosphate + H(+). Functionally, GTP hydrolase that promotes the GTP-dependent binding of aminoacyl-tRNA to the A-site of ribosomes during protein biosynthesis. This Flavobacterium johnsoniae (strain ATCC 17061 / DSM 2064 / JCM 8514 / BCRC 14874 / CCUG 350202 / NBRC 14942 / NCIMB 11054 / UW101) (Cytophaga johnsonae) protein is Elongation factor Tu.